We begin with the raw amino-acid sequence, 541 residues long: Phosphatidylethanolamine transferase Mcr-1 (541 aa).

Over 1 to 14 (MMQHTSVWYRRSVS) the chain is Cytoplasmic. A helical transmembrane segment spans residues 15-35 (PFVLVASVAVFLTATANLTFF). Topologically, residues 36 to 47 (DKISQTYPIADN) are periplasmic. Residues 48–68 (LGFVLTIAVVLFGAMLLITTL) form a helical membrane-spanning segment. Residues 69–73 (LSSYR) are Cytoplasmic-facing. The helical transmembrane segment at 74–94 (YVLKPVLILLLIMGAVTSYFT) threads the bilayer. The Periplasmic portion of the chain corresponds to 95-122 (DTYGTVYDTTMLQNALQTDQAETKDLLN). The helical transmembrane segment at 123 to 143 (AAFIMRIIGLGVLPSLLVAFV) threads the bilayer. Residues 144–157 (KVDYPTWGKGLMRR) lie on the Cytoplasmic side of the membrane. A helical membrane pass occupies residues 158-178 (LGLIVASLALILLPVVAFSSH). Residues 179–541 (YASFFRVHKP…KVKDRTAFIR (363 aa)) are Periplasmic-facing. Positions 246 and 285 each coordinate Zn(2+). 3 disulfide bridges follow: Cys-281–Cys-291, Cys-356–Cys-364, and Cys-414–Cys-422. Thr-285 carries the post-translational modification Phosphothreonine. The Zn(2+) site is built by Asp-465 and His-466.

It belongs to the phosphoethanolamine transferase family. In terms of assembly, monomer. Post-translationally, phosphorylated at Thr-285; may represent an intermediate in the catalytic mechanism.

Its subcellular location is the cell inner membrane. It catalyses the reaction lipid A (E. coli) + a 1,2-diacyl-sn-glycero-3-phosphoethanolamine + H(+) = lipid A 4'-(2-aminoethyl diphosphate) (E. coli) + a 1,2-diacyl-sn-glycerol. EDTA may inhibit activity. May be inhibited by ethanolamine. Functionally, probably catalyzes the addition of a phosphoethanolamine moiety to lipid A. Phosphoethanolamine modification of lipid A confers polymyxin resistance. Confers resistance to polymyxin-type antibiotics such as colistin; in the E.coli strain W3110. This Escherichia coli protein is Phosphatidylethanolamine transferase Mcr-1 (mcr1).